We begin with the raw amino-acid sequence, 38 residues long: Mu/omega-theraphotoxin-Mb1a (38 aa).

3 disulfide bridges follow: cysteine 7/cysteine 21, cysteine 14/cysteine 26, and cysteine 20/cysteine 33. Threonine 38 carries the threonine amide modification.

It belongs to the neurotoxin 10 (Hwtx-1) family. 28 (Jztx-11) subfamily. As to expression, expressed by the venom gland.

Its subcellular location is the secreted. Paralytic toxin that inhibits insect voltage-gated sodium (Nav) and calcium (Cav) channels in P.americana (American cockroach) dorsal unpaired median (DUM) neurons, and inhibits the B.germanica (German cockroach) Nav channel (BgNaV1). Also shows a delay in fast inactivation when tested on BgNaV1. May act as a gating-modifier toxin on Nav and as a pore blocker on Cav. In vivo, reversibly paralyzes both L.cuprina (Australian sheep blowfly) and M.domestica (housefly), but does not affect larvae of H.armigera (cotton bollworms). The chain is Mu/omega-theraphotoxin-Mb1a from Monocentropus balfouri (Socotra Island blue baboon tarantula).